We begin with the raw amino-acid sequence, 157 residues long: Transcription elongation factor GreA (157 aa).

The protein belongs to the GreA/GreB family.

Functionally, necessary for efficient RNA polymerase transcription elongation past template-encoded arresting sites. The arresting sites in DNA have the property of trapping a certain fraction of elongating RNA polymerases that pass through, resulting in locked ternary complexes. Cleavage of the nascent transcript by cleavage factors such as GreA or GreB allows the resumption of elongation from the new 3'terminus. GreA releases sequences of 2 to 3 nucleotides. The sequence is that of Transcription elongation factor GreA from Caulobacter vibrioides (strain ATCC 19089 / CIP 103742 / CB 15) (Caulobacter crescentus).